The sequence spans 581 residues: Myoneurin (581 aa).

One can recognise a BTB domain in the interval 24–89 (CDCTIVIGEF…IYTGTLNLDS (66 aa)). Residues 167–193 (PKQGALAKKSSQTKKKKKAFNSQKTGQ) are disordered. Short sequence motifs (nuclear localization signal) lie at residues 174–190 (KKSS…NSQK) and 256–261 (KRKRGK). S288 is modified (phosphoserine). C2H2-type zinc fingers lie at residues 301-323 (PMCN…MRIH), 329-351 (YVCH…VRTH), 357-380 (YKCE…RMHH), 386-408 (YKCD…ARKH), 414-436 (YVCD…VRRH), 442-464 (YVCD…SRKH), and 470-493 (FICE…TKVH).

Belongs to the krueppel C2H2-type zinc-finger protein family.

Its subcellular location is the nucleus. The sequence is that of Myoneurin (MYNN) from Bos taurus (Bovine).